We begin with the raw amino-acid sequence, 1865 residues long: Transient receptor potential cation channel subfamily M member 7 (1865 aa).

An N-acetylmethionine modification is found at Met1. At 1 to 850 the chain is on the cytoplasmic side; that stretch reads MSQKSWIEST…ITRKFYAFYH (850 aa). Residue Ser101 is modified to Phosphoserine. Residues 544–555 show a composition bias toward low complexity; it reads NRRSGRNTSSST. The disordered stretch occupies residues 544–575; it reads NRRSGRNTSSSTPQLRKSHESFGNRADKKEKM. A compositionally biased stretch (basic and acidic residues) spans 560-573; that stretch reads KSHESFGNRADKKE. Residues 851–876 traverse the membrane as a helical segment; it reads APIVKFWFNTLAYLGFLMLYTFVVLV. The Extracellular segment spans residues 877-882; that stretch reads QMEQLP. Residues 883-904 traverse the membrane as a helical segment; it reads SVQEWIVIAYIFTYAIEKVREI. Over 905 to 923 the chain is Cytoplasmic; that stretch reads FMSEAGKVNQKIKVWFSDY. Residues 924 to 943 form a helical membrane-spanning segment; sequence FNISDTIAIISFFIGFGLRF. Residues 944–956 lie on the Extracellular side of the membrane; the sequence is GAKWNFANAYDNH. Residues 957–980 form a helical membrane-spanning segment; the sequence is VFVAGRLIYCLNIIFWYVRLLDFL. Topologically, residues 981–999 are cytoplasmic; it reads AVNQQAGPYVMMIGKMVAN. The chain crosses the membrane as a helical span at residues 1000-1023; that stretch reads MFYIVVIMALVLLSFGVPRKAILY. At 1024–1025 the chain is on the extracellular side; the sequence is PH. The pore-forming intramembrane region spans 1026 to 1066; the sequence is EAPSWTLAKDIVFHPYWMIFGEVYAYEIDVCANDSVIPQIC. The Extracellular segment spans residues 1067-1069; that stretch reads GPG. Residues 1070–1098 form a helical membrane-spanning segment; that stretch reads TWLTPFLQAVYLFVQYIIMVNLLIAFFNN. Over 1099 to 1865 the chain is Cytoplasmic; the sequence is VYLQVKAISN…ESTNSVRLML (767 aa). Residues Cys1143, Cys1144, and Cys1146 are each lipidated (S-palmitoyl cysteine). Thr1163 is subject to Phosphothreonine; by autocatalysis. Ser1191 and Ser1193 each carry phosphoserine; by autocatalysis. Positions 1198 to 1250 form a coiled coil; the sequence is RVTFERVEQMCIQIKEVGDRVNYIKRSLQSLDSQIGHLQDLSALTVDTLKTLT. Ser1224 carries the phosphoserine modification. Phosphoserine; by autocatalysis is present on residues Ser1255 and Ser1258. The residue at position 1265 (Thr1265) is a Phosphothreonine; by autocatalysis. Phosphoserine; by autocatalysis is present on Ser1287. Ser1301 bears the Phosphoserine mark. Ser1358 is subject to Phosphoserine; by autocatalysis. Phosphoserine is present on residues Ser1361 and Ser1386. A compositionally biased stretch (low complexity) spans 1386–1398; it reads SSSTSIPHLSSPP. Residues 1386 to 1407 are disordered; the sequence is SSSTSIPHLSSPPTKFFVSTPS. Residues Ser1387 and Ser1390 each carry the phosphoserine; by autocatalysis modification. 2 positions are modified to phosphoserine: Ser1395 and Ser1396. At Ser1404 the chain carries Phosphoserine; by autocatalysis. Thr1405 is modified (phosphothreonine; by autocatalysis). Ser1407 carries the post-translational modification Phosphoserine; by autocatalysis. At Thr1435 the chain carries Phosphothreonine; by autocatalysis. Ser1446 carries the phosphoserine; by autocatalysis modification. Thr1455 bears the Phosphothreonine; by autocatalysis mark. Residues Ser1456 and Ser1463 each carry the phosphoserine; by autocatalysis modification. Thr1467 bears the Phosphothreonine mark. Ser1468 is modified (phosphoserine; by autocatalysis). Phosphothreonine; by autocatalysis is present on Thr1471. Ser1476 and Ser1477 each carry phosphoserine; by autocatalysis. Thr1482 is subject to Phosphothreonine; by autocatalysis. A disordered region spans residues 1492–1511; it reads HSKQAEKISRRPSTEDTHEV. Phosphoserine; by autocatalysis is present on Ser1493. The segment covering 1494-1511 has biased composition (basic and acidic residues); that stretch reads KQAEKISRRPSTEDTHEV. Ser1500 carries the phosphoserine modification. Residue Ser1504 is modified to Phosphoserine; by autocatalysis. Residue Thr1508 is modified to Phosphothreonine; by autocatalysis. 3 positions are modified to phosphoserine; by autocatalysis: Ser1513, Ser1527, and Ser1533. Positions 1524–1543 are disordered; the sequence is DRPSNREMPSEEGTLNGLTS. Phosphothreonine; by autocatalysis occurs at positions 1537 and 1542. Ser1543 is modified (phosphoserine; by autocatalysis). Position 1551 is a phosphothreonine; by autocatalysis (Thr1551). 2 positions are modified to phosphoserine; by autocatalysis: Ser1567 and Ser1569. The residue at position 1583 (Thr1583) is a Phosphothreonine; by autocatalysis. Residues 1594 to 1824 form the Alpha-type protein kinase domain; it reads ILNNSMSSWS…CCRKLKLPDL (231 aa). A phosphoserine; by autocatalysis mark is found at Ser1598 and Ser1615. ADP is bound by residues Gly1621, Gly1622, Leu1623, Arg1624, and Lys1648. Ser1660 is modified (phosphoserine; by autocatalysis). Phosphothreonine; by autocatalysis is present on Thr1685. Residues Glu1720, Glu1721, and Met1723 each coordinate ADP. His1753 is a binding site for Zn(2+). The active-site Proton acceptor is Asp1767. ADP is bound at residue Asp1777. Ser1779 carries the phosphoserine; by autocatalysis modification. Zn(2+)-binding residues include His1810, Cys1812, and Cys1816. Thr1830 is modified (phosphothreonine; by autocatalysis). The disordered stretch occupies residues 1836-1865; it reads FPQDEPSDLNLQPGNSTKESESTNSVRLML. Residues 1844–1865 show a composition bias toward polar residues; sequence LNLQPGNSTKESESTNSVRLML. The residue at position 1851 (Ser1851) is a Phosphoserine. The residue at position 1860 (Ser1860) is a Phosphoserine; by autocatalysis.

This sequence in the C-terminal section; belongs to the protein kinase superfamily. Alpha-type protein kinase family. ALPK subfamily. The protein in the N-terminal section; belongs to the transient receptor (TC 1.A.4) family. LTrpC subfamily. TRPM7 sub-subfamily. Homotetramer. Interacts with PLCB1. Forms heteromers with TRPM6; heteromeric channels are functionally different from the homomeric channels. Zn(2+) serves as cofactor. In terms of processing, palmitoylated; palmitoylation at Cys-1143, Cys-1144 and Cys-1146 promotes TRPM7 trafficking from the Golgi to the surface membrane. Autophosphorylated; autophosphorylation of C-terminus regulates TRPM7 kinase activity towards its substrates. Post-translationally, the C-terminal kinase domain can be cleaved from the channel segment in a cell-type-specific fashion. TRPM7 is cleaved by caspase-8, dissociating the kinase from the ion-conducting pore. The cleaved kinase fragments (M7CKs) can translocate to the cell nucleus and binds chromatin-remodeling complex proteins in a Zn(2+)-dependent manner to ultimately phosphorylate specific Ser/Thr residues of histones.

The protein localises to the cell membrane. It is found in the cytoplasmic vesicle membrane. Its subcellular location is the nucleus. The enzyme catalyses L-seryl-[protein] + ATP = O-phospho-L-seryl-[protein] + ADP + H(+). The catalysed reaction is L-threonyl-[protein] + ATP = O-phospho-L-threonyl-[protein] + ADP + H(+). It catalyses the reaction Mg(2+)(in) = Mg(2+)(out). It carries out the reaction Ca(2+)(in) = Ca(2+)(out). The enzyme catalyses Zn(2+)(in) = Zn(2+)(out). Channel displays constitutive activity. Channel activity is negatively regulated by cytosolic Mg(2+) and Mg-ATP. Channel activity is negatively regulated by low intracellular pH. Resting free cytosolic Mg(2+) and Mg-ATP concentrations seem to be sufficient to block native TRPM7 channel activity. TRPM7 channel activity is highly dependent on membrane levels of phosphatidylinositol 4,5 bisphosphate (PIP2). PIP2 hydrolysis negatively regulates TRPM7 channel activity. TRPM7 kinase activity does not affect channel activity. The kinase activity is controlled through the autophosphorylation of a serine/threonine-rich region located N-terminal to the catalytic domain. Bifunctional protein that combines an ion channel with an intrinsic kinase domain, enabling it to modulate cellular functions either by conducting ions through the pore or by phosphorylating downstream proteins via its kinase domain. The channel is highly permeable to divalent cations, specifically calcium (Ca2+), magnesium (Mg2+) and zinc (Zn2+) and mediates their influx. Controls a wide range of biological processes such as Ca2(+), Mg(2+) and Zn(2+) homeostasis, vesicular Zn(2+) release channel and intracellular Ca(2+) signaling, embryonic development, immune responses, cell motility, proliferation and differentiation. The C-terminal alpha-kinase domain autophosphorylates cytoplasmic residues of TRPM7. In vivo, TRPM7 phosphorylates SMAD2, suggesting that TRPM7 kinase may play a role in activating SMAD signaling pathways. In vitro, TRPM7 kinase phosphorylates ANXA1 (annexin A1), myosin II isoforms and a variety of proteins with diverse cellular functions. Its function is as follows. The cleaved channel exhibits substantially higher current and potentiates Fas receptor signaling. In terms of biological role, the C-terminal kinase domain can be cleaved from the channel segment in a cell-type-specific fashion. In immune cells, the TRPM7 kinase domain is clipped from the channel domain by caspases in response to Fas-receptor stimulation. The cleaved kinase fragments can translocate to the nucleus, and bind chromatin-remodeling complex proteins in a Zn(2+)-dependent manner to ultimately phosphorylate specific Ser/Thr residues of histones known to be functionally important for cell differentiation and embryonic development. This Homo sapiens (Human) protein is Transient receptor potential cation channel subfamily M member 7 (TRPM7).